A 190-amino-acid polypeptide reads, in one-letter code: NAD(P)H-quinone oxidoreductase subunit I (190 aa).

4Fe-4S ferredoxin-type domains are found at residues 55 to 84 and 95 to 124; these read GRIH…VDWT and KHYS…MTEE. [4Fe-4S] cluster is bound by residues C64, C67, C70, C74, C104, C107, C110, and C114. Residues 169 to 190 are disordered; the sequence is IEPHDLPAGSQRAGKRPEEITD.

This sequence belongs to the complex I 23 kDa subunit family. As to quaternary structure, NDH-1 is composed of at least 11 different subunits. The cofactor is [4Fe-4S] cluster.

Its subcellular location is the cellular thylakoid membrane. It catalyses the reaction a plastoquinone + NADH + (n+1) H(+)(in) = a plastoquinol + NAD(+) + n H(+)(out). The enzyme catalyses a plastoquinone + NADPH + (n+1) H(+)(in) = a plastoquinol + NADP(+) + n H(+)(out). NDH-1 shuttles electrons from an unknown electron donor, via FMN and iron-sulfur (Fe-S) centers, to quinones in the respiratory and/or the photosynthetic chain. The immediate electron acceptor for the enzyme in this species is believed to be plastoquinone. Couples the redox reaction to proton translocation, and thus conserves the redox energy in a proton gradient. In Microcystis aeruginosa (strain NIES-843 / IAM M-2473), this protein is NAD(P)H-quinone oxidoreductase subunit I.